We begin with the raw amino-acid sequence, 215 residues long: Protein Thf1 (215 aa).

Residues 188–209 (IELVQETIAAERRKKERRQAEQ) are a coiled coil.

The protein belongs to the THF1 family.

In terms of biological role, may be involved in photosynthetic membrane biogenesis. This chain is Protein Thf1, found in Synechococcus sp. (strain CC9902).